Consider the following 1212-residue polypeptide: MALMFTGHLLFLALLMFAFSTFEESVSNYSEWAVFTDDIDQFKTQKVQDFRPNQKLKKSMLHPSLYFDAGEIQAMRQKSRASHLHLFRAIRSAVTVMLSNPTYYLPPPKHADFAAKWNEIYGNNLPPLALYCLLCPEDKVAFEFVLEYMDRMVGYKDWLVENAPGDEVPIGHSLTGFATAFDFLYNLLDNHRRQKYLEKIWVITEEMYEYSKVRSWGKQLLHNHQATNMIALLTGALVTGVDKGSKANIWKQAVVDVMEKTMFLLNHIVDGSLDEGVAYGSYTAKSVTQYVFLAQRHFNINNLDNNWLKMHFWFYYATLLPGFQRTVGIADSNYNWFYGPESQLVFLDKFILKNGAGNWLAQQIRKHRPKDGPMVPSTAQRWSTLHTEYIWYDPQLTPQPPADYGTAKIHTFPNWGVVTYGAGLPNTQTNTFVSFKSGKLGGRAVYDIVHFQPYSWIDGWRSFNPGHEHPDQNSFTFAPNGQVFVSEALYGPKLSHLNNVLVFAPSPSSQCNKPWEGQLGECAQWLKWTGEEVGDAAGEIITASQHGEMVFVSGEAVSAYSSAMRLKSVYRALLLLNSQTLLVVDHIERQEDSPINSVSAFFHNLDIDFKYIPYKFMNRYNGAMMDVWDAHYKMFWFDHHGNSPMASIQEAEQAAEFKKRWTQFVNVTFQMEPTITRIAYVFYGPYINVSSCRFIDSSNPGLQISLNVNNTEHVVSIVTDYHNLKTRFNYLGFGGFASVADQGQITRFGLGTQAIVKPVRHDRIIFPFGFKFNIAVGLILCISLVILTFQWRFYLSFRKLMRWILILVIALWFIELLDVWSTCSQPICAKWTRTEAEGSKKSLSSEGHHMDLPDVVITSLPGSGAEILKQLFFNSSDFLYIRVPTAYIDIPETELEIDSFVDACEWKVSDIRSGHFRLLRGWLQSLVQDTKLHLQNIHLHEPNRGKLAQYFAMNKDKKRKFKRRESLPEQRSQMKGAFDRDAEYIRALRRHLVYYPSARPVLSLSSGSWTLKLHFFQEVLGASMRALYIVRDPRAWIYSMLYNSKPSLYSLKNVPEHLAKLFKIEGGKGKCNLNSGYAFEYEPLRKELSKSKSNAVSLLSHLWLANTAAALRINTDLLPTSYQLVKFEDIVHFPQKTTERIFAFLGIPLSPASLNQILFATSTNLFYLPYEGEISPTNTNVWKQNLPRDEIKLIENICWTLMDRLGYPKFMD.

A signal peptide spans 1-20; that stretch reads MALMFTGHLLFLALLMFAFS. 4 N-linked (GlcNAc...) asparagine glycosylation sites follow: N28, N666, N688, and N709. Helical transmembrane passes span 764-784 and 803-823; these read IIFP…CISL and WILI…WSTC. N-linked (GlcNAc...) asparagine glycosylation is present at N874.

It belongs to the dermatan-sulfate isomerase family. In terms of tissue distribution, expressed in different brain areas as well as in multiple other peripheral tissues.

The protein localises to the membrane. In Homo sapiens (Human), this protein is Dermatan-sulfate epimerase-like protein (DSEL).